The following is a 466-amino-acid chain: F-box/LRR-repeat protein fbxl-1 (466 aa).

The 47-residue stretch at 54-100 (SLINRVLPKEVLLKVFSFLDTKALCRSAQVCRSWSILALDGSNWQRV) folds into the F-box domain. LRR repeat units follow at residues 122 to 147 (GGFL…FTSR), 148 to 173 (CPNL…LGRY), 174 to 199 (CHKL…IGDG), 200 to 225 (CPNL…ILSN), 226 to 251 (CKSL…VEAH), 252 to 277 (MGAI…IANG), 278 to 303 (ATAL…LGQH), 304 to 329 (SHNL…LARG), 330 to 355 (CRQL…LANN), 356 to 381 (CTAL…LASK), and 408 to 433 (CKAL…FQHH).

In terms of assembly, component of the SCF (SKP1-CUL1-F-box protein)-type E3 ubiquitin ligase complex. In terms of tissue distribution, expressed in neuroglial cells such as the socket cell and sheath cell, neurosecretory motor neurons and regions around the pharynx and anus.

Its subcellular location is the perikaryon. It is found in the cell projection. The protein resides in the dendrite. It localises to the cilium. The protein localises to the axon. Substrate-recognition component of the SCF (SKP1-CUL1-F-box protein)-type E3 ubiquitin ligase complex. Plays a role in regulating the entry into the dauer state. In hermaphrodites, may play a role in modulating the rate of defecation. The polypeptide is F-box/LRR-repeat protein fbxl-1 (Caenorhabditis elegans).